The sequence spans 335 residues: Serpentine receptor class alpha-25 (335 aa).

5 helical membrane passes run 22 to 42, 151 to 171, 195 to 215, 245 to 265, and 280 to 300; these read IPVK…FYFA, LLII…YGVP, FRTV…YLSV, CILI…VNYI, and LAPF…VIYF.

The protein belongs to the nematode receptor-like protein sra family.

It localises to the membrane. The protein is Serpentine receptor class alpha-25 (sra-25) of Caenorhabditis elegans.